The sequence spans 60 residues: Large ribosomal subunit protein bL32 (60 aa).

Positions 1-21 are disordered; that stretch reads MAVPARHTSKAKKNKRRTHYK. Residues 7 to 20 are compositionally biased toward basic residues; it reads HTSKAKKNKRRTHY.

It belongs to the bacterial ribosomal protein bL32 family.

The sequence is that of Large ribosomal subunit protein bL32 from Streptococcus equi subsp. zooepidemicus (strain H70).